Here is a 434-residue protein sequence, read N- to C-terminus: Glutamyl-tRNA reductase (434 aa).

Substrate is bound by residues 49–52 (TCNR), S109, 114–116 (EPQ), and Q120. The active-site Nucleophile is C50. 189–194 (GAGEMC) contributes to the NADP(+) binding site.

Belongs to the glutamyl-tRNA reductase family. As to quaternary structure, homodimer.

It carries out the reaction (S)-4-amino-5-oxopentanoate + tRNA(Glu) + NADP(+) = L-glutamyl-tRNA(Glu) + NADPH + H(+). The protein operates within porphyrin-containing compound metabolism; protoporphyrin-IX biosynthesis; 5-aminolevulinate from L-glutamyl-tRNA(Glu): step 1/2. Its function is as follows. Catalyzes the NADPH-dependent reduction of glutamyl-tRNA(Glu) to glutamate 1-semialdehyde (GSA). In Geotalea uraniireducens (strain Rf4) (Geobacter uraniireducens), this protein is Glutamyl-tRNA reductase.